A 204-amino-acid chain; its full sequence is Arginine exporter protein ArgO (204 aa).

Helical transmembrane passes span 1 to 21 (MFAV…PLGP), 37 to 57 (LMVA…GIFG), 67 to 87 (LLLG…GWGA), 111 to 131 (IIAT…DTFV), 147 to 167 (WFAL…ALLA), and 179 to 199 (VQRV…LQLA).

This sequence belongs to the LysE/ArgO transporter (TC 2.A.75) family.

The protein resides in the cell inner membrane. The enzyme catalyses L-arginine(in) = L-arginine(out). Functionally, involved in the export of arginine. Important to control the intracellular level of arginine and the correct balance between arginine and lysine. The protein is Arginine exporter protein ArgO of Pectobacterium carotovorum subsp. carotovorum (strain PC1).